Consider the following 370-residue polypeptide: ABSCISIC ACID-INSENSITIVE 5-like protein 8 (370 aa).

Serine 25, serine 44, and serine 69 each carry phosphoserine. The interval 56-77 (SAEETQEGSQRQGSTTLPPTLS) is disordered. The segment covering 62 to 77 (EGSQRQGSTTLPPTLS) has biased composition (polar residues). Threonine 111 carries the post-translational modification Phosphothreonine. A compositionally biased stretch (polar residues) spans 260–278 (ESSLLSPSPYISNGSTSTR). Residues 260–281 (ESSLLSPSPYISNGSTSTRGGK) form a disordered region. The region spanning 293–356 (VDKKLRRKIK…MEPGMISLHE (64 aa)) is the bZIP domain. The segment at 295–314 (KKLRRKIKNRESAARSRARK) is basic motif. The leucine-zipper stretch occupies residues 328-342 (LKKDYEELLKQHVEL). The interval 349–370 (PGMISLHERPERKLRRTKSDIK) is disordered. The span at 354–370 (LHERPERKLRRTKSDIK) shows a compositional bias: basic and acidic residues.

Belongs to the bZIP family. ABI5 subfamily. As to quaternary structure, DNA-binding heterodimer.

The protein resides in the nucleus. In terms of biological role, could participate in abscisic acid-regulated gene expression. This is ABSCISIC ACID-INSENSITIVE 5-like protein 8 (BZIP15) from Arabidopsis thaliana (Mouse-ear cress).